The sequence spans 975 residues: Glycine dehydrogenase (decarboxylating) (975 aa).

Lysine 723 carries the N6-(pyridoxal phosphate)lysine modification.

It belongs to the GcvP family. The glycine cleavage system is composed of four proteins: P, T, L and H. The cofactor is pyridoxal 5'-phosphate.

The catalysed reaction is N(6)-[(R)-lipoyl]-L-lysyl-[glycine-cleavage complex H protein] + glycine + H(+) = N(6)-[(R)-S(8)-aminomethyldihydrolipoyl]-L-lysyl-[glycine-cleavage complex H protein] + CO2. The glycine cleavage system catalyzes the degradation of glycine. The P protein binds the alpha-amino group of glycine through its pyridoxal phosphate cofactor; CO(2) is released and the remaining methylamine moiety is then transferred to the lipoamide cofactor of the H protein. In Burkholderia multivorans (strain ATCC 17616 / 249), this protein is Glycine dehydrogenase (decarboxylating).